Consider the following 145-residue polypeptide: Large ribosomal subunit protein uL13 (145 aa).

This sequence belongs to the universal ribosomal protein uL13 family. As to quaternary structure, part of the 50S ribosomal subunit.

Functionally, this protein is one of the early assembly proteins of the 50S ribosomal subunit, although it is not seen to bind rRNA by itself. It is important during the early stages of 50S assembly. This chain is Large ribosomal subunit protein uL13, found in Geobacillus sp. (strain WCH70).